Here is a 292-residue protein sequence, read N- to C-terminus: AKT-interacting protein (292 aa).

Over residues 1–11 (MNPLWSMSSGS) the composition is skewed to polar residues. The disordered stretch occupies residues 1 to 64 (MNPLWSMSSG…SPAPAAQSTN (64 aa)). Positions 14-23 (KRAEGEEKTL) are enriched in basic and acidic residues. At Ser-30 the chain carries Phosphoserine. Residues 74 to 222 (YLEYSLLAEF…VVDSVKVCTA (149 aa)) enclose the UBC core domain.

The protein belongs to the ubiquitin-conjugating enzyme family. FTS subfamily. Component of the FTS/Hook/FHIP complex (FHF complex), composed of AKTIP/FTS, FHIP1B, and one or more members of the Hook family of proteins HOOK1, HOOK2, and HOOK3. Interacts directly with HOOK1, HOOK2 and HOOK3. The FHF complex associates with the homotypic vesicular sorting complex (the HOPS complex). Also interacts with AKT1. May interact with FHIP1A.

It is found in the cytoplasm. Its subcellular location is the cell membrane. In terms of biological role, component of the FTS/Hook/FHIP complex (FHF complex). The FHF complex may function to promote vesicle trafficking and/or fusion via the homotypic vesicular protein sorting complex (the HOPS complex). Regulates apoptosis by enhancing phosphorylation and activation of AKT1. Increases release of TNFSF6 via the AKT1/GSK3B/NFATC1 signaling cascade. FHF complex promotes the distribution of AP-4 complex to the perinuclear area of the cell. The protein is AKT-interacting protein (Aktip) of Rattus norvegicus (Rat).